Reading from the N-terminus, the 666-residue chain is Vicilin-like antimicrobial peptides 2-2 (666 aa).

Positions 1–27 (MAINTSNLCSLLFLLSLFLLSTTVSLA) are cleaved as a signal peptide. Disordered regions lie at residues 161 to 191 (QQKR…DPQQ) and 221 to 251 (RQHG…SDNP). The segment covering 239–251 (RYEEGEEKQSDNP) has biased composition (basic and acidic residues). Cupin type-1 domains lie at 271-410 (SVLE…ERLR) and 455-625 (YNLF…KEVE).

The protein belongs to the 7S seed storage protein family.

It is found in the secreted. In terms of biological role, antimicrobial peptides 2b, 2c and 2d have antibacterial and antifungal activity against a range of species. This Macadamia integrifolia (Macadamia nut) protein is Vicilin-like antimicrobial peptides 2-2.